The sequence spans 247 residues: 2,3-bisphosphoglycerate-dependent phosphoglycerate mutase (247 aa).

Residues 8-15, 21-22, Arg-60, 87-90, Lys-98, 114-115, and 183-184 each bind substrate; these read RHGESVWN, TG, ERHY, RR, and GN. The Tele-phosphohistidine intermediate role is filled by His-9. The active-site Proton donor/acceptor is the Glu-87.

The protein belongs to the phosphoglycerate mutase family. BPG-dependent PGAM subfamily. As to quaternary structure, homodimer.

It catalyses the reaction (2R)-2-phosphoglycerate = (2R)-3-phosphoglycerate. It participates in carbohydrate degradation; glycolysis; pyruvate from D-glyceraldehyde 3-phosphate: step 3/5. Catalyzes the interconversion of 2-phosphoglycerate and 3-phosphoglycerate. The sequence is that of 2,3-bisphosphoglycerate-dependent phosphoglycerate mutase from Geobacter sulfurreducens (strain ATCC 51573 / DSM 12127 / PCA).